Reading from the N-terminus, the 381-residue chain is Fatty acid elongase 6 (381 aa).

7 consecutive transmembrane segments (helical) span residues 10–30, 69–89, 107–127, 153–173, 182–202, 216–236, and 280–300; these read IAAA…LVYS, LPYL…SLIV, GLVH…GLMI, LIWL…IMLL, FLHV…LLVA, GVHV…SGIV, and LLQI…NFLV. A HxxHH motif motif is present at residues 184–188; the sequence is HVYHH. Histidine 187 functions as the Nucleophile in the catalytic mechanism. The interval 362–381 is disordered; the sequence is RKNGNGNGQKASLQAMAGSR.

This sequence belongs to the ELO family.

It is found in the membrane. It functions in the pathway lipid metabolism; polyunsaturated fatty acid biosynthesis. Its function is as follows. Involved in the synthesis of fatty acids. Elongates C18 polyunsaturated fatty acids (PUFAs) with a preference for Delta6 PUFAs. This chain is Fatty acid elongase 6, found in Leishmania major.